The sequence spans 290 residues: Flap endonuclease Xni (290 aa).

Residue aspartate 125 participates in Mg(2+) binding. Residues 181–275 enclose the 5'-3' exonuclease domain; that stretch reads VKTSQLIDFW…DIRLTTSSSA (95 aa). Positions 192, 203, and 206 each coordinate K(+). Residues 205–210 are interaction with DNA; it reads GIGQVT.

The protein belongs to the Xni family. The cofactor is Mg(2+). It depends on K(+) as a cofactor.

Functionally, has flap endonuclease activity. During DNA replication, flap endonucleases cleave the 5'-overhanging flap structure that is generated by displacement synthesis when DNA polymerase encounters the 5'-end of a downstream Okazaki fragment. The sequence is that of Flap endonuclease Xni from Colwellia psychrerythraea (strain 34H / ATCC BAA-681) (Vibrio psychroerythus).